The chain runs to 354 residues: Uroporphyrinogen decarboxylase (354 aa).

Substrate-binding positions include R27 to R31, D77, Y154, T209, and H327.

It belongs to the uroporphyrinogen decarboxylase family. In terms of assembly, homodimer.

Its subcellular location is the cytoplasm. The enzyme catalyses uroporphyrinogen III + 4 H(+) = coproporphyrinogen III + 4 CO2. It participates in porphyrin-containing compound metabolism; protoporphyrin-IX biosynthesis; coproporphyrinogen-III from 5-aminolevulinate: step 4/4. Functionally, catalyzes the decarboxylation of four acetate groups of uroporphyrinogen-III to yield coproporphyrinogen-III. The chain is Uroporphyrinogen decarboxylase from Salmonella paratyphi A (strain ATCC 9150 / SARB42).